The primary structure comprises 91 residues: MNKNELVSAVAEKAGLTKADAASAVDAVFETVQSELKNGGDIRLAGFGSFSVSRREASKGRNPSTGAEVDIPARNVPKFSAGKGLKDAVNS.

The protein belongs to the bacterial histone-like protein family.

Its function is as follows. Histone-like DNA-binding protein which is capable of wrapping DNA to stabilize it, and thus to prevent its denaturation under extreme environmental conditions. This Rhizobium leguminosarum protein is DNA-binding protein HRL18.